The chain runs to 352 residues: B1 bradykinin receptor (352 aa).

Residues 1-41 lie on the Extracellular side of the membrane; the sequence is MASWPPLELQSSNQSQLFPQNATACDNAPEAWDLLHRVLPT. Residues N13 and N21 are each glycosylated (N-linked (GlcNAc...) asparagine). The chain crosses the membrane as a helical span at residues 42-62; that stretch reads FIISICSFGLLGNLFVLLVFL. The Cytoplasmic segment spans residues 63 to 72; that stretch reads LPRRRLNVAE. A helical membrane pass occupies residues 73 to 93; it reads IYLANLAASDLVFVLGLPFWA. At 94–110 the chain is on the extracellular side; sequence ENIWNQFNWPFGALLCR. A disulfide bridge links C109 with C188. Residues 111 to 131 traverse the membrane as a helical segment; that stretch reads VINGIIKANLFISIFLVVAIS. The Cytoplasmic segment spans residues 132–153; that stretch reads QDRYCVLVHPMASRRRQRRRQA. A helical transmembrane segment spans residues 154-174; it reads RVTCVLIWVVGGLLSIPTFLL. At 175-206 the chain is on the extracellular side; the sequence is RSIQAVPDLNITACILLLPHEAWHFARIVELN. N184 carries N-linked (GlcNAc...) asparagine glycosylation. The helical transmembrane segment at 207–227 threads the bilayer; the sequence is ILAFLLPLAAIIFFNYHILAS. Residues 228 to 250 are Cytoplasmic-facing; it reads LRGREEVSRTRCGGSKDSKTTAL. The chain crosses the membrane as a helical span at residues 251-271; it reads ILTLVVAFLVCWAPYHFFAFL. Residues 272–294 are Extracellular-facing; it reads EFLFQVQAVRGCFWEDFIDLGLQ. A helical membrane pass occupies residues 295–315; it reads LANFLAFTNSSLNPVIYVFVG. Residues 316–352 lie on the Cytoplasmic side of the membrane; it reads RLFRTKVWELYKQCTPKSLAPISSSHRKEIFQLFWRN. C329 carries S-palmitoyl cysteine lipidation.

It belongs to the G-protein coupled receptor 1 family. Bradykinin receptor subfamily. BDKRB1 sub-subfamily.

The protein resides in the cell membrane. Functionally, this is a receptor for bradykinin. Could be a factor in chronic pain and inflammation. This chain is B1 bradykinin receptor (BDKRB1), found in Macaca mulatta (Rhesus macaque).